A 696-amino-acid polypeptide reads, in one-letter code: MEASVILPILKKKLAFLSGGKDRRSGLILTIPLCLEQTNMDELSVTLDYLLSIPSEKCKARGFTVIVDGRKSQWNVVKTVVVMLQNVVPAEVSLVCVVKPDEFWDKKVTHFCFWKEKDRLGFEVILVSANKLTRYIEPCQLTEDFGGSLTYDHMDWLNKRLVFEKFTKESTSLLDELALINNGSDKGNQQEKERSVDLNFLPSVDPETVLQTGHELLSELQQRRFNGSDGGVSWSPMDDELLAQPQVMKLLDSLREQYTRYQEVCRQRSKRTQLEEIQQKVMQVVNWLEGPGSEQLRAQWGIGDSIRASQALQQKHEEIESQHSEWFAVYVELNQQIAALLNAGDEEDLVELKSLQQQLSDVCYRQASQLEFRQNLLQAALEFHGVAQDLSQQLDGLLGMLCVDVAPADGASIQQTLKLLEEKLKSVDVGLQGLREKGQGLLDQISNQASWAYGKDVTIENKENVDHIQGVMEDMQLRKQRCEDMVDVRRLKMLQMVQLFKCEEDAAQAVEWLSELLDALLKTHIRLGDDAQETKVLLEKHRKFVDVAQSTYDYGRQLLQATVVLCQSLRCTSRSSGDTLPRLNRVWKQFTIASEERVHRLEMAIAFHSNAEKILQDCPEEPEAINDEEQFDEIEAVGKSLLDRLTVPVVYPDGTEQYFGSPSDMASTAENIRDRMKLVNLKRQQLRHPEMVTTES.

The CRAL-TRIO domain occupies 1–153; the sequence is MEASVILPIL…DFGGSLTYDH (153 aa). Spectrin repeat units follow at residues 275–378, 381–494, and 500–602; these read EEIQ…NLLQ, LEFH…LKML, and FKCE…HRLE.

It belongs to the SOLO family. As to quaternary structure, interacts (via the spectrin 1 repeat) with TRPC4 and TRPC5 (via CIRB domain). Interacts with CTNNB1. As to expression, broad expression. High expression in thalamus and brain. Significantly expressed in vasculature.

Its function is as follows. May act as the primary docking protein directing membrane turnover and assembly of the transient receptor potential channels TRPC4 and TRPC5. Binds phospholipids such as phosphatidylinositol monophosphates, phosphatidylinositol diphosphates (PIP2s) and phosphatidic acid, but not less polar lipids including phosphatidylcholine, phosphatidylserine, and phosphatidylinositol. The binding to PIP2s is calcium dependent. Might be involved in the plasma membrane localization of CTNNB1. The chain is SEC14 domain and spectrin repeat-containing protein 1 (SESTD1) from Homo sapiens (Human).